Here is a 327-residue protein sequence, read N- to C-terminus: Zinc transport protein ZntB (327 aa).

At 1–273 the chain is on the cytoplasmic side; that stretch reads MEAIKGSDVN…ARRTYTMSLM (273 aa). Residues 274–294 form a helical membrane-spanning segment; sequence AMVFLPSTFLTGLFGVNLGGI. Residues 295 to 300 lie on the Periplasmic side of the membrane; sequence PGGGWQ. The chain crosses the membrane as a helical span at residues 301–321; the sequence is FGFSIFCILLVVLIGGVALWL. Residues 322–327 lie on the Cytoplasmic side of the membrane; sequence YRSKWL.

The protein belongs to the CorA metal ion transporter (MIT) (TC 1.A.35) family.

It localises to the cell inner membrane. It carries out the reaction Zn(2+)(out) + H(+)(out) = Zn(2+)(in) + H(+)(in). In terms of biological role, zinc transporter. Acts as a Zn(2+):proton symporter, which likely mediates zinc ion uptake. This is Zinc transport protein ZntB from Shigella flexneri serotype 5b (strain 8401).